The primary structure comprises 269 residues: Small ribosomal subunit protein eS1 (269 aa).

Disordered regions lie at residues 1-20 (MAVG…SKKK) and 249-269 (AASG…QESV).

The protein belongs to the eukaryotic ribosomal protein eS1 family. As to quaternary structure, component of the small ribosomal subunit. Mature ribosomes consist of a small (40S) and a large (60S) subunit. The 40S subunit contains about 33 different proteins and 1 molecule of RNA (18S). The 60S subunit contains about 49 different proteins and 3 molecules of RNA (28S, 5.8S and 5S).

It is found in the cytoplasm. This is Small ribosomal subunit protein eS1 from Anopheles darlingi (Mosquito).